Consider the following 555-residue polypeptide: Formate--tetrahydrofolate ligase (555 aa).

Residue 65–72 (TPAGEGKT) coordinates ATP.

The protein belongs to the formate--tetrahydrofolate ligase family.

It carries out the reaction (6S)-5,6,7,8-tetrahydrofolate + formate + ATP = (6R)-10-formyltetrahydrofolate + ADP + phosphate. It functions in the pathway one-carbon metabolism; tetrahydrofolate interconversion. The sequence is that of Formate--tetrahydrofolate ligase from Thermoanaerobacter sp. (strain X514).